Consider the following 557-residue polypeptide: MPKEKYEPPDPRRMYTIMSSEEAANGKKSHWAELEISGKVRSLSSSLWSLTHLTALHLSDNSLSCIPSDIAKLHNLVYLDLSHNQIQSLPAELGNMVSLRELHLNYNQLRVLPFELGKLFQLQTLSLKGNPLTQDILNLCLEPDGTRRLLNYLLDNLSGTAKRISTEQPPPRSWIMLQEPDRTRPTALFSVMCYNVLCDKYATRQLYGYCPSWALNWDYRKKAIIQEILSCNADIISLQEVETEQYYSFFLVELKERGYNGFFSPKSRARTMSEQERKHVDGCAIFFKTEKFTLVQKHTVEFNQLAMANSEGSEAMLNRVMTKDNIGVAVLLELRKELIEMSSGKPHLGTEKQLILVANAHMHWDPEYSDVKLVQTMMFLSEVKNIIDKASRSLKSSVLGECGTIPLVLCADLNSLPDSGVVEYLSTGGVETNHKDFKELRYNESLTNFSCNGKNGMTNGRITHGFKLKSAYENGLMPYTNYTFDFKGIIDYIFYSKPQLNTLAILGPLDHHWLVENNISGCPHPLIPSDHFSLFAQLELLLPFLPQVNGIHLPGRR.

4 LRR repeats span residues 52–73 (HLTALHLSDNSLSCIPSDIAKL), 75–96 (NLVYLDLSHNQIQSLPAELGNM), 98–120 (SLRELHLNYNQLRVLPFELGKLF), and 121–143 (QLQTLSLKGNPLTQDILNLCLEP). Positions 153–557 (LLDNLSGTAK…VNGIHLPGRR (405 aa)) are nuclease domain. Glutamate 240 is a binding site for Mg(2+). Substrate is bound by residues glutamate 240, glutamate 276, histidine 361, and proline 366. Aspartate 412 contacts Mg(2+). Aspartate 412 (proton donor/acceptor) is an active-site residue. Substrate contacts are provided by asparagine 414, asparagine 481, and phenylalanine 486.

It belongs to the CCR4/nocturin family. Component of the CCR4-NOT complex; distinct complexes seem to exist that differ in the participation of probably mutually exclusive catalytic subunits; the complex contains two deadenylase subunits, CNOT6 or CNOT6L, and CNOT7 or CNOT8. Interacts with CNOT7 and CNOT8. Interacts with UNR. Interacts with ZFP36L1 (via N-terminus). Interacts with ZNF335. Requires Mg(2+) as cofactor.

It is found in the cytoplasm. The protein localises to the nucleus. The enzyme catalyses Exonucleolytic cleavage of poly(A) to 5'-AMP.. Poly(A) nuclease with 3'-5' RNase activity. Catalytic component of the CCR4-NOT complex which is one of the major cellular mRNA deadenylases and is linked to various cellular processes including bulk mRNA degradation, miRNA-mediated repression, translational repression during translational initiation and general transcription regulation. Additional complex functions may be a consequence of its influence on mRNA expression. Involved in mRNA decay mediated by the major-protein-coding determinant of instability (mCRD) of the FOS gene in the cytoplasm. In the presence of ZNF335, enhances ligand-dependent transcriptional activity of nuclear hormone receptors. Mediates cell proliferation and cell survival and prevents cellular senescence. The chain is CCR4-NOT transcription complex subunit 6 (Cnot6) from Mus musculus (Mouse).